Here is a 319-residue protein sequence, read N- to C-terminus: 4-diphosphocytidyl-2-C-methyl-D-erythritol kinase (319 aa).

Lys18 is a catalytic residue. Pro103–Thr113 contacts ATP. Residue Asp145 is part of the active site.

The protein belongs to the GHMP kinase family. IspE subfamily.

It carries out the reaction 4-CDP-2-C-methyl-D-erythritol + ATP = 4-CDP-2-C-methyl-D-erythritol 2-phosphate + ADP + H(+). The protein operates within isoprenoid biosynthesis; isopentenyl diphosphate biosynthesis via DXP pathway; isopentenyl diphosphate from 1-deoxy-D-xylulose 5-phosphate: step 3/6. Its function is as follows. Catalyzes the phosphorylation of the position 2 hydroxy group of 4-diphosphocytidyl-2C-methyl-D-erythritol. The protein is 4-diphosphocytidyl-2-C-methyl-D-erythritol kinase of Prochlorococcus marinus (strain NATL2A).